We begin with the raw amino-acid sequence, 719 residues long: Leucine-rich repeat and fibronectin type-III domain-containing protein 5 (719 aa).

Residues 1-17 (MEKILFYLFLIGIAVKA) form the signal peptide. Residues 18-51 (QICPKRCVCQILSPNLATLCAKKGLLFVPPNIDR) enclose the LRRNT domain. Residues 18–529 (QICPKRCVCQ…MQSQFLGGTM (512 aa)) are Extracellular-facing. LRR repeat units lie at residues 52 to 73 (RTVELRLADNFVTNIKRKDFAN), 76 to 97 (SLVDLTLSRNTISFITPHAFAD), 100 to 121 (NLRALHLNSNRLTKITNDMFSG), 124 to 145 (NLHHLILNNNQLTLISSTAFDD), 148 to 169 (ALEELDLSYNNLETIPWDAVEK), 172 to 193 (SLHTLSLDHNMIDNIPKGTFSH), and 196 to 217 (KMTRLDVTSNKLQKLPPDPLFQ). N-linked (GlcNAc...) asparagine glycosylation occurs at Asn-73. The LRRCT domain occupies 240-286 (NPLHCNCELLWLRRLSREDDLETCASPPLLTGRYFWSIPEEEFLCEP). The Ig-like domain occupies 287-373 (PLITRHTHEM…GEATQIVDLH (87 aa)). Cys-308 and Cys-357 are joined by a disulfide. N-linked (GlcNAc...) asparagine glycans are attached at residues Asn-330, Asn-339, Asn-382, Asn-406, and Asn-452. The tract at residues 385–414 (NHIHEPDPGSSDISTSTKSGSNTSSSNGDT) is disordered. A compositionally biased stretch (low complexity) spans 393–414 (GSSDISTSTKSGSNTSSSNGDT). The region spanning 414 to 503 (TKLSQDKIVV…ITSLTATRVV (90 aa)) is the Fibronectin type-III domain. A helical membrane pass occupies residues 530–550 (IIIIGGIIVASVLVFIIILMI). At 551 to 719 (RYKVCNNNGQ…VQETQRLELI (169 aa)) the chain is on the cytoplasmic side. A compositionally biased stretch (low complexity) spans 615 to 627 (ETCSSQDSSTTTS). The segment at 615–694 (ETCSSQDSST…SVTEGPTSKR (80 aa)) is disordered. Composition is skewed to polar residues over residues 628 to 641 (ALPPSWTSSTSVSQ) and 649 to 677 (TKPSTEPQNEAVTNVESQNTNRNNSTALQ).

This sequence belongs to the LRFN family. Can form heteromeric complexes with LRFN1, LRFN2, LRFN3 and LFRN4. Able to form homomeric complexes across cell junctions, between adjacent cells. Does not interact with DLG1, DLG2, DLG3 and DLG4.

The protein localises to the membrane. Functionally, cell adhesion molecule that mediates homophilic cell-cell adhesion in a Ca(2+)-independent manner. Promotes neurite outgrowth in hippocampal neurons. In Homo sapiens (Human), this protein is Leucine-rich repeat and fibronectin type-III domain-containing protein 5 (LRFN5).